We begin with the raw amino-acid sequence, 1021 residues long: Sodium/potassium-transporting ATPase subunit alpha-1 (1021 aa).

The propeptide occupies 1 to 5 (MGKGV). The span at 1-11 (MGKGVGRDKYE) shows a compositional bias: basic and acidic residues. Residues 1–36 (MGKGVGRDKYEPAAVSEHGDKKKAKKERDMDELKKE) are disordered. The Cytoplasmic portion of the chain corresponds to 4-85 (GVGRDKYEPA…NALTPPPTTP (82 aa)). Lys-9 carries the N6-acetyllysine modification. The residue at position 10 (Tyr-10) is a Phosphotyrosine. Ser-16 carries the phosphoserine; by PKC modification. Lys-21 carries the post-translational modification N6-acetyllysine. A compositionally biased stretch (basic and acidic residues) spans 26-36 (KERDMDELKKE). A phosphoserine mark is found at Ser-38 and Ser-45. Positions 80-82 (PPP) are phosphoinositide-3 kinase binding. A helical transmembrane segment spans residues 86–106 (EWVKFCRQLFGGFSMLLWIGA). The Extracellular segment spans residues 107–129 (ILCFLAYGIQAATEEEPQNDNLY). The helical transmembrane segment at 130–150 (LGVVLSAVVIITGCFSYYQEA) threads the bilayer. Residues 151-286 (KSSKIMESFK…GGQTPIAAEI (136 aa)) are Cytoplasmic-facing. A disordered region spans residues 214 to 233 (SSLTGESEPQTRSPDFTNEN). Ser-226 carries the post-translational modification Phosphoserine. The residue at position 258 (Tyr-258) is a Phosphotyrosine. The chain crosses the membrane as a helical span at residues 287 to 306 (EHFIHIITGVAVFLGVSFFI). The Extracellular segment spans residues 307-318 (LSLILEYTWLEA). A helical transmembrane segment spans residues 319 to 336 (VIFLIGIIVANVPEGLLA). Residues 337–770 (TVTVCLTLTA…EEGRLIFDNL (434 aa)) are Cytoplasmic-facing. Residue Asp-374 is the 4-aspartylphosphate intermediate of the active site. 2 positions are modified to phosphoserine: Ser-450 and Ser-482. Lys-485 is a binding site for ATP. Position 540 is a phosphotyrosine (Tyr-540). Residues 594–715 (RAAVPDAVGK…QGAIVAVTGD (122 aa)) form a mediates interaction with SCN7A region. Residue Lys-659 is modified to N6-succinyllysine. Phosphoserine occurs at positions 666 and 673. Mg(2+) contacts are provided by Asp-715 and Asp-719. The chain crosses the membrane as a helical span at residues 771 to 790 (KKSIAYTLTSNIPEITPFLI). Residues 791–800 (FIIANIPLPL) lie on the Extracellular side of the membrane. Residues 801 to 821 (GTVTILCIDLGTDMVPAISLA) form a helical membrane-spanning segment. At 822-841 (YEQAESDIMKRQPRNPKTDK) the chain is on the cytoplasmic side. Residues 842-864 (LVNERLISMAYGQIGMIQALGGF) traverse the membrane as a helical segment. Residues 865–916 (FTYFVILAENGFLPTHLLGLRVDWDDRWINDVEDSYGQQWTYEQRKIVEFTC) lie on the Extracellular side of the membrane. Residues 917–936 (HTAFFVSIVVVQWADLVICK) traverse the membrane as a helical segment. Over 937 to 949 (TRRNSVFQQGMKN) the chain is Cytoplasmic. Ser-941 is subject to Phosphoserine; by PKA. The helical transmembrane segment at 950-968 (KILIFGLFEETALAAFLSY) threads the bilayer. At 969-983 (CPGMGVALRMYPLKP) the chain is on the extracellular side. The chain crosses the membrane as a helical span at residues 984-1004 (TWWFCAFPYSLLIFVYDEVRK). Over 1005–1021 (LIIRRRPGGWVEKETYY) the chain is Cytoplasmic.

This sequence belongs to the cation transport ATPase (P-type) (TC 3.A.3) family. Type IIC subfamily. As to quaternary structure, the sodium/potassium-transporting ATPase is composed of a catalytic alpha subunit, an auxiliary non-catalytic beta subunit and an additional regulatory subunit. Interacts with regulatory subunit FXYD1. Interacts with regulatory subunit FXYD3. Interacts with SIK1. Interacts with SLC35G1 and STIM1. Interacts with CLN3; this interaction regulates the sodium/potassium-transporting ATPase complex localization at the plasma membrane. Interacts with SCN7A; activates ATP1A1 P-type sodium:potassium-exchanging transporter activity which indirectly signals to nearby neurons to regulate sodium homeostasis. Phosphorylation on Tyr-10 modulates pumping activity. Phosphorylation of Ser-941 by PKA modulates the response of ATP1A1 to PKC. Dephosphorylation by protein phosphatase 2A (PP2A) following increases in intracellular sodium, leading to increase catalytic activity.

Its subcellular location is the cell membrane. The protein localises to the basolateral cell membrane. The protein resides in the sarcolemma. It localises to the cell projection. It is found in the axon. Its subcellular location is the melanosome. The catalysed reaction is K(+)(out) + Na(+)(in) + ATP + H2O = K(+)(in) + Na(+)(out) + ADP + phosphate + H(+). In terms of biological role, this is the catalytic component of the active enzyme, which catalyzes the hydrolysis of ATP coupled with the exchange of sodium and potassium ions across the plasma membrane. This action creates the electrochemical gradient of sodium and potassium ions, providing the energy for active transport of various nutrients. Could also be part of an osmosensory signaling pathway that senses body-fluid sodium levels and controls salt intake behavior as well as voluntary water intake to regulate sodium homeostasis. The polypeptide is Sodium/potassium-transporting ATPase subunit alpha-1 (ATP1A1) (Canis lupus familiaris (Dog)).